The primary structure comprises 237 residues: MGFGKPRGGGGGGGRGFGGGGGGGGRGFGGGGGGRGGGGGRGGGGGFGRGGGGRGGGRGAFDTGPPERVIPLGNYVYSCQNDLVCKVDIQDVPYFNAPIFLENKEQVGKIDEIFGTVRDYSVSIKLSDNVYANSFKPNQKLFIDPGKLLPIARFLPKPPQPKGAKKAFTNNRGGGGGGGGFGGRGGGRGGGGRGGGGGRGGGGFRGGAGRNGGGGGGGGFNRGRGGGGGGGGGRGRW.

2 stretches are compositionally biased toward gly residues: residues Met-1–Gly-59 and Arg-172–Trp-237. 2 disordered regions span residues Met-1 to Gly-64 and Lys-157 to Trp-237. RGG-box regions lie at residues Gly-4 to Gly-56 and Lys-166 to Arg-236.

This sequence belongs to the GAR1 family. As to quaternary structure, component of the box H/ACA small nucleolar ribonucleoprotein (H/ACA snoRNP) complex consisting of Nop60B, Gar1, NPH2 and Nop10, and associated with H/ACA-type snoRNAs.

It localises to the nucleus. The protein resides in the nucleolus. Its function is as follows. Component of the box H/ACA small nucleolar ribonucleoprotein (H/ACA snoRNP) complex, which catalyzes pseudouridylation of rRNA. This involves the isomerization of uridine such that the ribose is subsequently attached to C5, instead of the normal N1. Pseudouridine ('psi') residues may serve to stabilize the conformation of rRNAs. Required for ribosome biogenesis. H/ACA snoRNP complex-dependent ribosome biogenesis is important in female germline cell differentiation during oogenesis. The protein is H/ACA ribonucleoprotein complex subunit 1 of Drosophila melanogaster (Fruit fly).